The sequence spans 371 residues: Cyanide hydratase (371 aa).

In terms of domain architecture, CN hydrolase spans 8-286 (YKAAAVQAEP…EGLMFVEIDL (279 aa)). Glutamate 48 (proton acceptor) is an active-site residue. The active site involves lysine 130. Cysteine 165 serves as the catalytic Nucleophile. Residues 326-356 (DGGIGTYNTQDRVGLNRPLDAPKVDGPSGVS) are disordered.

It belongs to the carbon-nitrogen hydrolase superfamily. Nitrilase family. Oligomer of dimers, forming left-handed helical fibers.

The catalysed reaction is formamide = hydrogen cyanide + H2O. In terms of biological role, catalyzes the hydration of cyanide to formamide. Degradation of cyanide may be important for plant pathogenic fungi in infection of cyanogenic plants. Can also transform some nitriles like 2-cyanopyridine and fumaronitrile and has a minor activity with 4-cyanophenyl acetonitrile (4-CPA). This is Cyanide hydratase from Botryotinia fuckeliana (strain T4) (Noble rot fungus).